The chain runs to 752 residues: MAP/microtubule affinity-regulating kinase 4 (752 aa).

Positions 1 to 36 (MSSRTVLAPGNDRNSDTHGTLGSGRSSDKGPSWSSR) are disordered. One can recognise a Protein kinase domain in the interval 59-310 (YRLLRTIGKG…LEQIMKDKWI (252 aa)). Residues 65 to 73 (IGKGNFAKV) and K88 each bind ATP. The Proton acceptor role is filled by D181. Phosphothreonine; by LKB1 is present on T214. One can recognise a UBA domain in the interval 324-368 (EPEEDFGDTKRIEVMVGMGYTREEIKESLTSQKYNEVTATYLLLG). Residues 385–614 (ARVRAPSDTT…PAGRPRPTTN (230 aa)) form a disordered region. A compositionally biased stretch (low complexity) spans 391-406 (SDTTNGTSSSKGTSHS). 2 positions are modified to phosphoserine: S423 and S543. The segment covering 544–553 (PSSHSLAPPS) has biased composition (low complexity). Residues 703 to 752 (AGGPEPLSHFEVEVCQLPRPGLRGVLFRRVAGTALAFRTLVTRISNDLEL) enclose the KA1 domain.

It belongs to the protein kinase superfamily. CAMK Ser/Thr protein kinase family. SNF1 subfamily. As to quaternary structure, interacts with MAPT/TAU. Interacts with gamma-tubulin. Interacts with ODF2. Interacts with USP9X. Interacts with YWHAQ. Interacts with NLRP3; promoting NLRP3 recruitment to microtubule organizing center (MTOC). Mg(2+) serves as cofactor. In terms of processing, ubiquitinated with 'Lys-29'- and 'Lys-33'-linked polyubiquitins which appear to impede LKB1-mediated phosphorylation. Deubiquitinated by USP9X. Phosphorylated at Thr-214 by STK11/LKB1 in complex with STE20-related adapter-alpha (STRADA) pseudo kinase and CAB39. Phosphorylated throughout the cell cycle. As to expression, ubiquitous. Isoform 2 is brain-specific. Expressed at highest levels in brain and testis. Also expressed in heart, lung, liver, muscle, kidney and spleen.

It is found in the cytoplasm. The protein resides in the cytoskeleton. The protein localises to the microtubule organizing center. Its subcellular location is the centrosome. It localises to the cilium basal body. It is found in the cilium axoneme. The protein resides in the cell projection. The protein localises to the dendrite. The catalysed reaction is L-seryl-[protein] + ATP = O-phospho-L-seryl-[protein] + ADP + H(+). It carries out the reaction L-threonyl-[protein] + ATP = O-phospho-L-threonyl-[protein] + ADP + H(+). Its activity is regulated as follows. Activated by phosphorylation on Thr-214. Serine/threonine-protein kinase. Phosphorylates the microtubule-associated protein MAPT/TAU. Also phosphorylates the microtubule-associated proteins MAP2 and MAP4. Involved in regulation of the microtubule network, causing reorganization of microtubules into bundles. Required for the initiation of axoneme extension during cilium assembly. Regulates the centrosomal location of ODF2 and phosphorylates ODF2 in vitro. Plays a role in cell cycle progression, specifically in the G1/S checkpoint. Reduces neuronal cell survival. Plays a role in energy homeostasis by regulating satiety and metabolic rate. Promotes adipogenesis by activating JNK1 and inhibiting the p38MAPK pathway, and triggers apoptosis by activating the JNK1 pathway. Phosphorylates mTORC1 complex member RPTOR and acts as a negative regulator of the mTORC1 complex, probably due to disruption of the interaction between phosphorylated RPTOR and the RRAGA/RRAGC heterodimer which is required for mTORC1 activation. Involved in NLRP3 positioning along microtubules by mediating NLRP3 recruitment to microtubule organizing center (MTOC) upon inflammasome activation. The polypeptide is MAP/microtubule affinity-regulating kinase 4 (Homo sapiens (Human)).